A 162-amino-acid chain; its full sequence is Peptide methionine sulfoxide reductase MsrA (162 aa).

C16 is a catalytic residue.

This sequence belongs to the MsrA Met sulfoxide reductase family.

The catalysed reaction is L-methionyl-[protein] + [thioredoxin]-disulfide + H2O = L-methionyl-(S)-S-oxide-[protein] + [thioredoxin]-dithiol. It carries out the reaction [thioredoxin]-disulfide + L-methionine + H2O = L-methionine (S)-S-oxide + [thioredoxin]-dithiol. Has an important function as a repair enzyme for proteins that have been inactivated by oxidation. Catalyzes the reversible oxidation-reduction of methionine sulfoxide in proteins to methionine. This Geobacter sulfurreducens (strain ATCC 51573 / DSM 12127 / PCA) protein is Peptide methionine sulfoxide reductase MsrA.